The following is a 122-amino-acid chain: Large ribosomal subunit protein uL14 (122 aa).

The protein belongs to the universal ribosomal protein uL14 family. Part of the 50S ribosomal subunit. Forms a cluster with proteins L3 and L19. In the 70S ribosome, L14 and L19 interact and together make contacts with the 16S rRNA in bridges B5 and B8.

Its function is as follows. Binds to 23S rRNA. Forms part of two intersubunit bridges in the 70S ribosome. In Shewanella denitrificans (strain OS217 / ATCC BAA-1090 / DSM 15013), this protein is Large ribosomal subunit protein uL14.